Reading from the N-terminus, the 717-residue chain is Glutamate--cysteine ligase (717 aa).

The segment at 484-576 is disordered; the sequence is SKTTEQRAAK…TDSDHTDTDD (93 aa). 2 stretches are compositionally biased toward low complexity: residues 492–518 and 551–567; these read AKAQAQAQAQAKAQAQTNGKATLNGNG and GTTNGTNGSSNGSSNGT.

Belongs to the glutamate--cysteine ligase type 3 family.

It carries out the reaction L-cysteine + L-glutamate + ATP = gamma-L-glutamyl-L-cysteine + ADP + phosphate + H(+). It catalyses the reaction (2S)-2-aminobutanoate + L-glutamate + ATP = gamma-L-glutamyl-(2S)-2-aminobutanoate + ADP + phosphate + H(+). It participates in sulfur metabolism; glutathione biosynthesis; glutathione from L-cysteine and L-glutamate: step 1/2. Its function is as follows. Catalyzes the ATP-dependent ligation of L-glutamate and L-cysteine and participates in the first and rate-limiting step in glutathione biosynthesis. This chain is Glutamate--cysteine ligase, found in Drosophila melanogaster (Fruit fly).